The following is a 202-amino-acid chain: Probable septum site-determining protein MinC (202 aa).

It belongs to the MinC family. In terms of assembly, interacts with MinD and FtsZ.

In terms of biological role, cell division inhibitor that blocks the formation of polar Z ring septums. Rapidly oscillates between the poles of the cell to destabilize FtsZ filaments that have formed before they mature into polar Z rings. Prevents FtsZ polymerization. The protein is Probable septum site-determining protein MinC of Dictyoglomus turgidum (strain DSM 6724 / Z-1310).